We begin with the raw amino-acid sequence, 215 residues long: Cytochrome b6 (215 aa).

The helical transmembrane segment at 32-52 (IFYCLGGITLTCFLVQVATGF) threads the bilayer. Cys35 is a heme c binding site. Heme b is bound by residues His86 and His100. Transmembrane regions (helical) follow at residues 90 to 110 (ASMM…TGGF), 116 to 136 (LTWV…VTGY), and 186 to 206 (LHTF…FLMI). Residues His187 and His202 each contribute to the heme b site.

It belongs to the cytochrome b family. PetB subfamily. The 4 large subunits of the cytochrome b6-f complex are cytochrome b6, subunit IV (17 kDa polypeptide, PetD), cytochrome f and the Rieske protein, while the 4 small subunits are PetG, PetL, PetM and PetN. The complex functions as a dimer. Heme b serves as cofactor. Heme c is required as a cofactor.

It is found in the plastid. It localises to the chloroplast thylakoid membrane. Functionally, component of the cytochrome b6-f complex, which mediates electron transfer between photosystem II (PSII) and photosystem I (PSI), cyclic electron flow around PSI, and state transitions. This is Cytochrome b6 from Nicotiana tabacum (Common tobacco).